The following is a 113-amino-acid chain: Large ribosomal subunit protein bL17 (113 aa).

Belongs to the bacterial ribosomal protein bL17 family. In terms of assembly, part of the 50S ribosomal subunit. Contacts protein L32.

The chain is Large ribosomal subunit protein bL17 from Clostridium kluyveri (strain NBRC 12016).